Reading from the N-terminus, the 625-residue chain is Acetolactate synthase (625 aa).

The disordered stretch occupies residues 1 to 29 (MSAPTKPHARPQGAGNSVPNTVKPATQFP). The span at 14–29 (AGNSVPNTVKPATQFP) shows a compositional bias: polar residues. Glu-92 contacts thiamine diphosphate. FAD is bound by residues Arg-194, 300–321 (HGTVAAVAALQRSDLLIALGTR), and 343–362 (DIDPAEIGKNRHADVPIVGD). Positions 436–516 (QHQMWAAQFI…IKVALINNGN (81 aa)) are thiamine pyrophosphate binding. Mg(2+) is bound by residues Asp-487 and Asn-514.

This sequence belongs to the TPP enzyme family. It depends on Mg(2+) as a cofactor. The cofactor is thiamine diphosphate.

It catalyses the reaction 2 pyruvate + H(+) = (2S)-2-acetolactate + CO2. It participates in amino-acid biosynthesis; L-isoleucine biosynthesis; L-isoleucine from 2-oxobutanoate: step 1/4. The protein operates within amino-acid biosynthesis; L-valine biosynthesis; L-valine from pyruvate: step 1/4. This chain is Acetolactate synthase (ilvB), found in Mycobacterium leprae (strain TN).